The chain runs to 77 residues: Translation initiation factor IF-1, chloroplastic (77 aa).

Residues 1 to 71 (MKEQKWIHEG…TRGRIIYRLR (71 aa)) enclose the S1-like domain.

The protein belongs to the IF-1 family. In terms of assembly, component of the 30S ribosomal translation pre-initiation complex which assembles on the 30S ribosome in the order IF-2 and IF-3, IF-1 and N-formylmethionyl-tRNA(fMet); mRNA recruitment can occur at any time during PIC assembly.

The protein localises to the plastid. It localises to the chloroplast. Its function is as follows. One of the essential components for the initiation of protein synthesis. Stabilizes the binding of IF-2 and IF-3 on the 30S subunit to which N-formylmethionyl-tRNA(fMet) subsequently binds. Helps modulate mRNA selection, yielding the 30S pre-initiation complex (PIC). Upon addition of the 50S ribosomal subunit IF-1, IF-2 and IF-3 are released leaving the mature 70S translation initiation complex. This is Translation initiation factor IF-1, chloroplastic from Antirrhinum majus (Garden snapdragon).